Here is a 163-residue protein sequence, read N- to C-terminus: NADH-quinone oxidoreductase subunit I (163 aa).

2 consecutive 4Fe-4S ferredoxin-type domains span residues 54 to 84 and 94 to 123; these read LRRY…IDAE and TRYD…EGPN. Positions 64, 67, 70, 74, 103, 106, 109, and 113 each coordinate [4Fe-4S] cluster.

It belongs to the complex I 23 kDa subunit family. As to quaternary structure, NDH-1 is composed of at least 14 different subunits, Nqo1 to Nqo14. The complex has a L-shaped structure, with the hydrophobic arm (subunits Nqo7, Nqo8, Nqo10 to Nqo14) embedded in the inner membrane and the hydrophilic peripheral arm (subunits Nqo1 to Nqo6, Nqo9) protruding into the bacterial cytoplasm. The hydrophilic domain contains all the redox centers. NADH-quinone oxidoreductase forms a supercomplex with ubiquinol-cytochrome c reductase complex (complex III or cytochrome b-c1 complex) and cytochrome c oxidase (complex IV), which stabilizes the NADH-quinone oxidoreductase complex. It depends on [4Fe-4S] cluster as a cofactor.

The protein resides in the cell inner membrane. It catalyses the reaction a quinone + NADH + 5 H(+)(in) = a quinol + NAD(+) + 4 H(+)(out). Functionally, NDH-1 shuttles electrons from NADH, via FMN and iron-sulfur (Fe-S) centers, to quinones in the respiratory chain. The immediate electron acceptor for the enzyme in this species is believed to be ubiquinone. Couples the redox reaction to proton translocation (for every two electrons transferred, four hydrogen ions are translocated across the cytoplasmic membrane), and thus conserves the redox energy in a proton gradient. In Paracoccus denitrificans (strain Pd 1222), this protein is NADH-quinone oxidoreductase subunit I.